The primary structure comprises 305 residues: MTNQYGILFKQEQAHDDAIWSVAWGTNKKENSETVVTGSLDDLVKVWKWRDERLDLQWSLEGHQLGVVSVDISHTLPIAASSSLDAHIRLWDLENGKQIKSIDAGPVDAWTLAFSPDSQYLATGTHVGKVNIFGVESGKKEYSLDTRGKFILSIAYSPDGKYLASGAIDGIINIFDIATGKLLHTLEGHAMPIRSLTFSPDSQLLVTASDDGYIKIYDVQHANLAGTLSGHASWVLNVAFCPDDTHFVSSSSDKSVKVWDVGTRTCVHTFFDHQDQVWGVKYNGNGSKIVSVGDDQEIHIYDCPI.

N-acetylmethionine is present on Met1. Residue Thr2 is modified to N-acetylthreonine; in WD repeat-containing protein 61, N-terminally processed. WD repeat units lie at residues 14–57 (AHDD…LDLQ), 62–101 (GHQL…QIKS), 104–143 (AGPV…KEYS), 146–187 (TRGK…HTLE), 188–227 (GHAM…LAGT), 230–269 (GHAS…CVHT), and 272–305 (DHQD…DCPI).

It belongs to the SKI8 family. In terms of assembly, component of the PAF1 complex, which consists of CDC73, PAF1, LEO1, CTR9, RTF1 and SKIC8. The PAF1 complex interacts with PHF5A. Within the PAF1 complex interacts directly with PHF5A. Component of the SKI complex which consists of SKIC2, SKIC3 and SKIC8.

Its subcellular location is the nucleus. It is found in the cytoplasm. Its function is as follows. Component of the PAF1 complex (PAF1C) which has multiple functions during transcription by RNA polymerase II and is implicated in regulation of development and maintenance of embryonic stem cell pluripotency. PAF1C associates with RNA polymerase II through interaction with POLR2A CTD non-phosphorylated and 'Ser-2'- and 'Ser-5'-phosphorylated forms and is involved in transcriptional elongation, acting both independently and synergistically with TCEA1 and in cooperation with the DSIF complex and HTATSF1. PAF1C is required for transcription of Hox and Wnt target genes. PAF1C is involved in hematopoiesis and stimulates transcriptional activity of KMT2A/MLL1; it promotes leukemogenesis through association with KMT2A/MLL1-rearranged oncoproteins, such as KMT2A/MLL1-MLLT3/AF9 and KMT2A/MLL1-MLLT1/ENL. PAF1C is involved in histone modifications such as ubiquitination of histone H2B and methylation on histone H3 'Lys-4' (H3K4me3). PAF1C recruits the RNF20/40 E3 ubiquitin-protein ligase complex and the E2 enzyme UBE2A or UBE2B to chromatin which mediate monoubiquitination of 'Lys-120' of histone H2B (H2BK120ub1); UB2A/B-mediated H2B ubiquitination is proposed to be coupled to transcription. PAF1C is involved in mRNA 3' end formation probably through association with cleavage and poly(A) factors. In case of infection by influenza A strain H3N2, PAF1C associates with viral NS1 protein, thereby regulating gene transcription. Required for mono- and trimethylation on histone H3 'Lys-4' (H3K4me3), dimethylation on histone H3 'Lys-79' (H3K4me3). Required for Hox gene transcription. Also acts as a component of the SKI complex, a multiprotein complex that assists the RNA-degrading exosome during the mRNA decay and quality-control pathways. The SKI complex catalyzes mRNA extraction from 80S ribosomal complexes in the 3'-5' direction and channels mRNA to the cytosolic exosome for degradation. SKI-mediated extraction of mRNA from stalled ribosomes allow binding of the Pelota-HBS1L complex and subsequent ribosome disassembly by ABCE1 for ribosome recycling. This chain is Superkiller complex protein 8, found in Homo sapiens (Human).